A 3387-amino-acid polypeptide reads, in one-letter code: Genome polyprotein (3387 aa).

Topologically, residues M1–S100 are cytoplasmic. Positions L36–L71 are hydrophobic; homodimerization of capsid protein C. The propeptide at S100–A113 is ER anchor for the capsid protein C, removed in mature form by serine protease NS3. The chain crosses the membrane as a helical span at residues T101–S117. Over T118 to E237 the chain is Extracellular. N182 carries an N-linked (GlcNAc...) asparagine; by host glycan. The helical transmembrane segment at S238–G258 threads the bilayer. Topologically, residues Q259 to T265 are cytoplasmic. A helical membrane pass occupies residues V266–G279. Residues M280–T725 lie on the Extracellular side of the membrane. 4 cysteine pairs are disulfide-bonded: C282–C309, C339–C400, C353–C384, and C371–C395. The N-linked (GlcNAc...) asparagine; by host glycan is linked to N346. The interval D377–G390 is fusion peptide. N432 carries an N-linked (GlcNAc...) asparagine; by host glycan. Intrachain disulfides connect C464–C564 and C581–C612. The chain crosses the membrane as a helical span at residues M726–G746. At T747–S753 the chain is on the cytoplasmic side. The chain crosses the membrane as a helical span at residues M754–A774. Residues D775–M1194 lie on the Extracellular side of the membrane. Cystine bridges form between C778–C789, C829–C917, C953–C997, C1054–C1103, C1065–C1087, and C1086–C1090. N-linked (GlcNAc...) asparagine; by host glycosylation is found at N904 and N981. A helical transmembrane segment spans residues G1195–L1218. Residues R1219–R1224 lie on the Lumenal side of the membrane. Residues E1225 to H1243 form a helical membrane-spanning segment. Topologically, residues D1244–N1267 are cytoplasmic. Residues T1268–M1288 form a helical membrane-spanning segment. A1289 is a topological domain (lumenal). Residues W1290–T1308 form a helical membrane-spanning segment. The Lumenal portion of the chain corresponds to S1309 to H1316. Residues W1317–L1337 traverse the membrane as a helical segment. The Cytoplasmic portion of the chain corresponds to M1338–S1345. The chain crosses the membrane as a helical span at residues W1346–L1366. Residues K1367–D1369 are Lumenal-facing. The chain crosses the membrane as a helical span at residues V1370–G1390. The Cytoplasmic segment spans residues S1391–N1437. Positions L1397–T1436 are interacts with and activates NS3 protease. Residues M1438–I1458 constitute an intramembrane region (helical). Over P1459–S2143 the chain is Cytoplasmic. One can recognise a Peptidase S7 domain in the interval S1475–V1652. Residues H1525, D1549, and S1609 each act as charge relay system; for serine protease NS3 activity in the active site. Positions E1654 to E1810 constitute a Helicase ATP-binding domain. An important for RNA-binding region spans residues R1658 to R1661. Residue L1667–T1674 participates in ATP binding. The DEAH box motif lies at D1758–H1761. The Helicase C-terminal domain occupies T1820–R1987. K1862 is subject to N6-acetyllysine; by host. Residues L2144–F2164 form a helical membrane-spanning segment. Residues M2165 to G2169 lie on the Lumenal side of the membrane. Positions I2170 to A2190 form an intramembrane region, helical. Residue E2191 is a topological domain, lumenal. Residues I2192–V2212 traverse the membrane as a helical segment. The Cytoplasmic segment spans residues P2213–Q2225. A helical membrane pass occupies residues L2226–G2246. At L2247–D2270 the chain is on the lumenal side. Residues L2271–L2291 constitute an intramembrane region (helical). Residues R2292–N2301 are Lumenal-facing. Residues N2297 and N2301 are each glycosylated (N-linked (GlcNAc...) asparagine; by host). Positions L2302–P2322 form an intramembrane region, helical. Residues L2323–P2343 lie on the Lumenal side of the membrane. Residues T2344–L2364 form a helical membrane-spanning segment. The Cytoplasmic segment spans residues Q2365 to Q2409. A helical transmembrane segment spans residues V2410–C2430. Topologically, residues E2431–T2455 are lumenal. N-linked (GlcNAc...) asparagine; by host glycosylation occurs at N2453. The chain crosses the membrane as a helical span at residues I2456 to F2476. Residues S2477–L3387 are Cytoplasmic-facing. The region spanning T2489 to S2751 is the mRNA cap 0-1 NS5-type MT domain. Position 2543 (S2543) interacts with S-adenosyl-L-methionine. The residue at position 2543 (S2543) is a Phosphoserine. The For 2'-O-MTase activity role is filled by K2548. The short motif at V2564–L2567 is the SUMO-interacting motif element. S-adenosyl-L-methionine is bound by residues G2573, W2574, T2591, K2592, D2618, and V2619. D2633 acts as the For 2'-O-MTase activity in catalysis. I2634 contributes to the S-adenosyl-L-methionine binding site. Residues K2668 and E2704 each act as for 2'-O-MTase activity in the active site. Y2706 lines the S-adenosyl-L-methionine pocket. The Zn(2+) site is built by E2925, H2929, C2934, and C2937. The 151-residue stretch at L3016 to L3166 folds into the RdRp catalytic domain. H3200, C3216, and C3335 together coordinate Zn(2+).

In the N-terminal section; belongs to the class I-like SAM-binding methyltransferase superfamily. mRNA cap 0-1 NS5-type methyltransferase family. Homodimer. Interacts (via N-terminus) with host EXOC1 (via C-terminus); this interaction results in EXOC1 degradation through the proteasome degradation pathway. As to quaternary structure, forms heterodimers with envelope protein E in the endoplasmic reticulum and Golgi. In terms of assembly, homodimer; in the endoplasmic reticulum and Golgi. Interacts with protein prM. Interacts with non-structural protein 1. Homodimer; Homohexamer when secreted. Interacts with envelope protein E. As to quaternary structure, interacts (via N-terminus) with serine protease NS3. In terms of assembly, forms a heterodimer with serine protease NS3. May form homooligomers. Forms a heterodimer with NS2B. Interacts with NS4B. Interacts with unphosphorylated RNA-directed RNA polymerase NS5; this interaction stimulates RNA-directed RNA polymerase NS5 guanylyltransferase activity. Interacts with host SHFL. As to quaternary structure, interacts with host MAVS; this interaction inhibits the synthesis of IFN-beta. Interacts with host SHFL. Interacts with host AUP1; the interaction occurs in the presence of Dengue virus NS4B and induces lipophagy which facilitates production of virus progeny particles. In terms of assembly, interacts with serine protease NS3. Homodimer. Interacts with host STAT2; this interaction inhibits the phosphorylation of the latter, and, when all viral proteins are present (polyprotein), targets STAT2 for degradation. Interacts with serine protease NS3. Interacts with host PAF1 complex; the interaction may prevent the recruitment of the PAF1 complex to interferon-responsive genes, and thus reduces the immune response. Post-translationally, specific enzymatic cleavages in vivo yield mature proteins. Cleavages in the lumen of endoplasmic reticulum are performed by host signal peptidase, whereas cleavages in the cytoplasmic side are performed by serine protease NS3. Signal cleavage at the 2K-4B site requires a prior NS3 protease-mediated cleavage at the 4A-2K site. In terms of processing, cleaved in post-Golgi vesicles by a host furin, releasing the mature small envelope protein M, and peptide pr. This cleavage is incomplete as up to 30% of viral particles still carry uncleaved prM. N-glycosylated. Post-translationally, N-glycosylated. The excreted form is glycosylated and this is required for efficient secretion of the protein from infected cells. In terms of processing, acetylated by host KAT5. Acetylation modulates NS3 RNA-binding and unwinding activities and plays an important positive role for viral replication. Sumoylation of RNA-directed RNA polymerase NS5 increases NS5 protein stability allowing proper viral RNA replication. Post-translationally, phosphorylated on serines residues. This phosphorylation may trigger NS5 nuclear localization.

The protein localises to the virion. Its subcellular location is the host nucleus. The protein resides in the host cytoplasm. It localises to the host perinuclear region. It is found in the secreted. The protein localises to the virion membrane. Its subcellular location is the host endoplasmic reticulum membrane. The protein resides in the host mitochondrion. The catalysed reaction is Selective hydrolysis of -Xaa-Xaa-|-Yaa- bonds in which each of the Xaa can be either Arg or Lys and Yaa can be either Ser or Ala.. The enzyme catalyses RNA(n) + a ribonucleoside 5'-triphosphate = RNA(n+1) + diphosphate. It catalyses the reaction a ribonucleoside 5'-triphosphate + H2O = a ribonucleoside 5'-diphosphate + phosphate + H(+). It carries out the reaction ATP + H2O = ADP + phosphate + H(+). The catalysed reaction is a 5'-end (5'-triphosphoguanosine)-ribonucleoside in mRNA + S-adenosyl-L-methionine = a 5'-end (N(7)-methyl 5'-triphosphoguanosine)-ribonucleoside in mRNA + S-adenosyl-L-homocysteine. The enzyme catalyses a 5'-end (N(7)-methyl 5'-triphosphoguanosine)-ribonucleoside in mRNA + S-adenosyl-L-methionine = a 5'-end (N(7)-methyl 5'-triphosphoguanosine)-(2'-O-methyl-ribonucleoside) in mRNA + S-adenosyl-L-homocysteine + H(+). Its function is as follows. Plays a role in virus budding by binding to the cell membrane and gathering the viral RNA into a nucleocapsid that forms the core of a mature virus particle. During virus entry, may induce genome penetration into the host cytoplasm after hemifusion induced by the surface proteins. Can migrate to the cell nucleus where it modulates host functions. Overcomes the anti-viral effects of host EXOC1 by sequestering and degrading the latter through the proteasome degradation pathway. Functionally, inhibits RNA silencing by interfering with host Dicer. In terms of biological role, prevents premature fusion activity of envelope proteins in trans-Golgi by binding to envelope protein E at pH6.0. After virion release in extracellular space, gets dissociated from E dimers. Acts as a chaperone for envelope protein E during intracellular virion assembly by masking and inactivating envelope protein E fusion peptide. prM is the only viral peptide matured by host furin in the trans-Golgi network probably to avoid catastrophic activation of the viral fusion activity in acidic Golgi compartment prior to virion release. prM-E cleavage is inefficient, and many virions are only partially matured. These uncleaved prM would play a role in immune evasion. Its function is as follows. May play a role in virus budding. Exerts cytotoxic effects by activating a mitochondrial apoptotic pathway through M ectodomain. May display a viroporin activity. Functionally, binds to host cell surface receptor and mediates fusion between viral and cellular membranes. Envelope protein is synthesized in the endoplasmic reticulum in the form of heterodimer with protein prM. They play a role in virion budding in the ER, and the newly formed immature particle is covered with 60 spikes composed of heterodimer between precursor prM and envelope protein E. The virion is transported to the Golgi apparatus where the low pH causes dissociation of PrM-E heterodimers and formation of E homodimers. prM-E cleavage is inefficient, and many virions are only partially matured. These uncleaved prM would play a role in immune evasion. In terms of biological role, involved in immune evasion, pathogenesis and viral replication. Once cleaved off the polyprotein, is targeted to three destinations: the viral replication cycle, the plasma membrane and the extracellular compartment. Essential for viral replication. Required for formation of the replication complex and recruitment of other non-structural proteins to the ER-derived membrane structures. Excreted as a hexameric lipoparticle that plays a role against host immune response. Antagonizing the complement function. Binds to the host macrophages and dendritic cells. Inhibits signal transduction originating from Toll-like receptor 3 (TLR3). Disrupts the host endothelial glycocalyx layer of host pulmonary microvascular endothelial cells, inducing degradation of sialic acid and shedding of heparan sulfate proteoglycans. NS1 induces expression of sialidases, heparanase, and activates cathepsin L, which activates heparanase via enzymatic cleavage. These effects are probably linked to the endothelial hyperpermeability observed in severe dengue disease. Its function is as follows. Component of the viral RNA replication complex that functions in virion assembly and antagonizes the host immune response. Functionally, required cofactor for the serine protease function of NS3. May have membrane-destabilizing activity and form viroporins. In terms of biological role, displays three enzymatic activities: serine protease, NTPase and RNA helicase. NS3 serine protease, in association with NS2B, performs its autocleavage and cleaves the polyprotein at dibasic sites in the cytoplasm: C-prM, NS2A-NS2B, NS2B-NS3, NS3-NS4A, NS4A-2K and NS4B-NS5. NS3 RNA helicase binds RNA and unwinds dsRNA in the 3' to 5' direction. Regulates the ATPase activity of the NS3 helicase activity. NS4A allows NS3 helicase to conserve energy during unwinding. Plays a role in the inhibition of the host innate immune response. Interacts with host MAVS and thereby prevents the interaction between RIGI and MAVS. In turn, IFN-beta production is impaired. Interacts with host AUP1 which mediates induction of lipophagy in host cells and facilitates production of virus progeny particles. Its function is as follows. Functions as a signal peptide for NS4B and is required for the interferon antagonism activity of the latter. Functionally, induces the formation of ER-derived membrane vesicles where the viral replication takes place. Inhibits interferon (IFN)-induced host STAT1 phosphorylation and nuclear translocation, thereby preventing the establishment of cellular antiviral state by blocking the IFN-alpha/beta pathway. In terms of biological role, replicates the viral (+) and (-) RNA genome, and performs the capping of genomes in the cytoplasm. NS5 methylates viral RNA cap at guanine N-7 and ribose 2'-O positions. Besides its role in RNA genome replication, also prevents the establishment of cellular antiviral state by blocking the interferon-alpha/beta (IFN-alpha/beta) signaling pathway. Inhibits host TYK2 and STAT2 phosphorylation, thereby preventing activation of JAK-STAT signaling pathway. May reduce immune responses by preventing the recruitment of the host PAF1 complex to interferon-responsive genes. The polypeptide is Genome polyprotein (Dengue virus type 4 (strain Thailand/0348/1991) (DENV-4)).